The sequence spans 236 residues: Truncated formate dehydrogenase 2 (236 aa).

Residues 36–37, aspartate 57, 104–108, threonine 130, aspartate 156, and 185–188 contribute to the NAD(+) site; these read RI, PLHKD, and HISG.

This sequence belongs to the D-isomer specific 2-hydroxyacid dehydrogenase family. FDH subfamily.

In Saccharomyces cerevisiae (strain ATCC 204508 / S288c) (Baker's yeast), this protein is Truncated formate dehydrogenase 2.